Reading from the N-terminus, the 434-residue chain is Putative nuclease OPG089 (434 aa).

6 residues coordinate Mg(2+): Asp33, Asp74, Glu168, Asp170, Asp196, and Asp198.

Belongs to the XPG/RAD2 endonuclease family. FEN1 subfamily. Mg(2+) serves as cofactor.

Its subcellular location is the virion. Putative nuclease that seems to be required for double-strand break repair, homologous recombination, and production of full-length viral genomic DNA. This Vaccinia virus (strain Western Reserve) (VACV) protein is Putative nuclease OPG089 (OPG089).